Reading from the N-terminus, the 908-residue chain is Autophagy-related protein 9 (908 aa).

Over M1–R216 the chain is Cytoplasmic. Positions S64–H162 are disordered. A helical membrane pass occupies residues V217–V237. The Lumenal portion of the chain corresponds to D238–N259. N259 is a glycosylation site (N-linked (GlcNAc...) asparagine). A helical transmembrane segment spans residues M260 to I280. Residues Q281–R433 are Cytoplasmic-facing. The stretch at F434–I454 is an intramembrane region. The Cytoplasmic portion of the chain corresponds to V455–S525. Residues F526–F546 form a helical membrane-spanning segment. The Lumenal portion of the chain corresponds to L547 to R555. The chain crosses the membrane as a helical span at residues T556 to S576. Topologically, residues E577–K622 are cytoplasmic. Residues L623–S643 lie within the membrane without spanning it. At L644–R908 the chain is on the cytoplasmic side. Disordered regions lie at residues A751–A779 and Q809–V878. The segment covering G813–S825 has biased composition (gly residues). Residues Q839–L852 show a composition bias toward basic and acidic residues.

Belongs to the ATG9 family. Homotrimer; forms a homotrimer with a central pore that forms a path between the two membrane leaflets. In terms of processing, phosphorylated by apg-1. Apg-1 phosphorylation is required for preautophagosome elongation.

It is found in the preautophagosomal structure membrane. It localises to the cytoplasmic vesicle membrane. Its subcellular location is the golgi apparatus membrane. The protein localises to the endoplasmic reticulum membrane. The enzyme catalyses a 1,2-diacyl-sn-glycero-3-phosphocholine(in) = a 1,2-diacyl-sn-glycero-3-phosphocholine(out). It catalyses the reaction a 1,2-diacyl-sn-glycero-3-phospho-L-serine(in) = a 1,2-diacyl-sn-glycero-3-phospho-L-serine(out). It carries out the reaction a 1,2-diacyl-sn-glycero-3-phosphoethanolamine(in) = a 1,2-diacyl-sn-glycero-3-phosphoethanolamine(out). The catalysed reaction is a 1,2-diacyl-sn-glycero-3-phospho-(1D-myo-inositol-3-phosphate)(in) = a 1,2-diacyl-sn-glycero-3-phospho-(1D-myo-inositol-3-phosphate)(out). Its function is as follows. Phospholipid scramblase involved in autophagy and cytoplasm to vacuole transport (Cvt) vesicle formation. Cycles between the preautophagosomal structure/phagophore assembly site (PAS) and the cytoplasmic vesicle pool and supplies membrane for the growing autophagosome. Lipid scramblase activity plays a key role in preautophagosomal structure/phagophore assembly by distributing the phospholipids that arrive through atg-2 from the cytoplasmic to the luminal leaflet of the bilayer, thereby driving autophagosomal membrane expansion. Required for mitophagy. Also involved in endoplasmic reticulum-specific autophagic process and is essential for the survival of cells subjected to severe ER stress. Different machineries are required for anterograde trafficking to the PAS during either the Cvt pathway or bulk autophagy and for retrograde trafficking. This chain is Autophagy-related protein 9 (apg-7), found in Neurospora crassa (strain ATCC 24698 / 74-OR23-1A / CBS 708.71 / DSM 1257 / FGSC 987).